The sequence spans 255 residues: NAD kinase (255 aa).

The active-site Proton acceptor is the Asp-44. Residues 44-45, His-49, 114-115, Asp-144, Ala-152, 155-160, and Gln-216 contribute to the NAD(+) site; these read DG, NE, and SAYNLS.

The protein belongs to the NAD kinase family. It depends on a divalent metal cation as a cofactor.

Its subcellular location is the cytoplasm. The catalysed reaction is NAD(+) + ATP = ADP + NADP(+) + H(+). Its function is as follows. Involved in the regulation of the intracellular balance of NAD and NADP, and is a key enzyme in the biosynthesis of NADP. Catalyzes specifically the phosphorylation on 2'-hydroxyl of the adenosine moiety of NAD to yield NADP. The sequence is that of NAD kinase from Rickettsia africae (strain ESF-5).